A 364-amino-acid chain; its full sequence is DNA replication and repair protein RecF (364 aa).

30–37 (GENGSGKT) provides a ligand contact to ATP.

Belongs to the RecF family.

The protein resides in the cytoplasm. In terms of biological role, the RecF protein is involved in DNA metabolism; it is required for DNA replication and normal SOS inducibility. RecF binds preferentially to single-stranded, linear DNA. It also seems to bind ATP. This Pseudoalteromonas translucida (strain TAC 125) protein is DNA replication and repair protein RecF.